Consider the following 86-residue polypeptide: Sec-independent protein translocase protein TatA (86 aa).

The chain crosses the membrane as a helical span at residues 3-23 (IFGVGLPEVTVILILALLIFG). The disordered stretch occupies residues 56–86 (MNEEDESPKSIESNQTNEINQEKIDSENSKK). The span at 65-74 (SIESNQTNEI) shows a compositional bias: polar residues. A compositionally biased stretch (basic and acidic residues) spans 75–86 (NQEKIDSENSKK).

It belongs to the TatA/E family. In terms of assembly, forms a complex with TatC.

Its subcellular location is the cell inner membrane. Its function is as follows. Part of the twin-arginine translocation (Tat) system that transports large folded proteins containing a characteristic twin-arginine motif in their signal peptide across membranes. TatA could form the protein-conducting channel of the Tat system. In Prochlorococcus marinus (strain MIT 9215), this protein is Sec-independent protein translocase protein TatA.